The sequence spans 682 residues: Potassium-transporting ATPase ATP-binding subunit (682 aa).

The next 4 helical transmembrane spans lie at 44–64 (VMAVVMGGTLLAAVITASGHG), 66–86 (AGFGWAVTAILFVTVLFGNFA), 233–253 (LTFLIVVASLPAIAGFVGVTL), and 257–277 (LLIALLVCLIPTTIGGLLPAI). Asp-310 (4-aspartylphosphate intermediate) is an active-site residue. Residues Asp-347, Glu-351, 377 to 384 (FTAQTRMS), and Lys-395 each bind ATP. Mg(2+) contacts are provided by Asp-518 and Asp-522. 3 consecutive transmembrane segments (helical) span residues 588-608 (FAILPALFAAAIPSMAALNVM), 616-636 (AVLAALIFNALIIPALIPLAL), and 658-678 (GLGGVLLPFAAIKLIDLALVA).

Belongs to the cation transport ATPase (P-type) (TC 3.A.3) family. Type IA subfamily. In terms of assembly, the system is composed of three essential subunits: KdpA, KdpB and KdpC.

It is found in the cell inner membrane. The catalysed reaction is K(+)(out) + ATP + H2O = K(+)(in) + ADP + phosphate + H(+). Part of the high-affinity ATP-driven potassium transport (or Kdp) system, which catalyzes the hydrolysis of ATP coupled with the electrogenic transport of potassium into the cytoplasm. This subunit is responsible for energy coupling to the transport system and for the release of the potassium ions to the cytoplasm. The sequence is that of Potassium-transporting ATPase ATP-binding subunit from Xanthomonas campestris pv. campestris (strain ATCC 33913 / DSM 3586 / NCPPB 528 / LMG 568 / P 25).